Reading from the N-terminus, the 271-residue chain is Bifunctional protein FolD (271 aa).

Residues G154–S156, S181, and I222 each bind NADP(+).

It belongs to the tetrahydrofolate dehydrogenase/cyclohydrolase family. In terms of assembly, homodimer.

It carries out the reaction (6R)-5,10-methylene-5,6,7,8-tetrahydrofolate + NADP(+) = (6R)-5,10-methenyltetrahydrofolate + NADPH. The catalysed reaction is (6R)-5,10-methenyltetrahydrofolate + H2O = (6R)-10-formyltetrahydrofolate + H(+). Its pathway is one-carbon metabolism; tetrahydrofolate interconversion. Catalyzes the oxidation of 5,10-methylenetetrahydrofolate to 5,10-methenyltetrahydrofolate and then the hydrolysis of 5,10-methenyltetrahydrofolate to 10-formyltetrahydrofolate. In Thermotoga petrophila (strain ATCC BAA-488 / DSM 13995 / JCM 10881 / RKU-1), this protein is Bifunctional protein FolD.